The following is a 105-amino-acid chain: U-scoloptoxin(05)-Ssd1a (105 aa).

The signal sequence occupies residues 1–24 (MKEAVKMSCLCIFVFLFLFSLTDA). The disordered stretch occupies residues 79–105 (HVPESNQKDGKVSTHMSSCNTDGCNAN). Positions 92 to 105 (THMSSCNTDGCNAN) are enriched in polar residues.

This sequence belongs to the scoloptoxin-05 family. Contains 4 disulfide bonds. As to expression, expressed by the venom gland.

Its subcellular location is the secreted. This is U-scoloptoxin(05)-Ssd1a from Scolopendra dehaani (Thai centipede).